We begin with the raw amino-acid sequence, 370 residues long: Queuine tRNA-ribosyltransferase (370 aa).

The active-site Proton acceptor is D89. Substrate-binding positions include 89–93 (DSGGF), D143, and G214. The tract at residues 245–251 (GVGKPED) is RNA binding. D264 acts as the Nucleophile in catalysis. The RNA binding; important for wobble base 34 recognition stretch occupies residues 269 to 273 (TRNAR). Zn(2+) contacts are provided by C302, C304, C307, and H333.

This sequence belongs to the queuine tRNA-ribosyltransferase family. Homodimer. Within each dimer, one monomer is responsible for RNA recognition and catalysis, while the other monomer binds to the replacement base PreQ1. It depends on Zn(2+) as a cofactor.

It catalyses the reaction 7-aminomethyl-7-carbaguanine + guanosine(34) in tRNA = 7-aminomethyl-7-carbaguanosine(34) in tRNA + guanine. The protein operates within tRNA modification; tRNA-queuosine biosynthesis. Its function is as follows. Catalyzes the base-exchange of a guanine (G) residue with the queuine precursor 7-aminomethyl-7-deazaguanine (PreQ1) at position 34 (anticodon wobble position) in tRNAs with GU(N) anticodons (tRNA-Asp, -Asn, -His and -Tyr). Catalysis occurs through a double-displacement mechanism. The nucleophile active site attacks the C1' of nucleotide 34 to detach the guanine base from the RNA, forming a covalent enzyme-RNA intermediate. The proton acceptor active site deprotonates the incoming PreQ1, allowing a nucleophilic attack on the C1' of the ribose to form the product. After dissociation, two additional enzymatic reactions on the tRNA convert PreQ1 to queuine (Q), resulting in the hypermodified nucleoside queuosine (7-(((4,5-cis-dihydroxy-2-cyclopenten-1-yl)amino)methyl)-7-deazaguanosine). The chain is Queuine tRNA-ribosyltransferase from Buchnera aphidicola subsp. Acyrthosiphon pisum (strain APS) (Acyrthosiphon pisum symbiotic bacterium).